A 142-amino-acid polypeptide reads, in one-letter code: Anti-sigma F factor (142 aa).

This sequence belongs to the anti-sigma-factor family.

It carries out the reaction L-seryl-[protein] + ATP = O-phospho-L-seryl-[protein] + ADP + H(+). The enzyme catalyses L-threonyl-[protein] + ATP = O-phospho-L-threonyl-[protein] + ADP + H(+). Functionally, binds to sigma F and blocks its ability to form an RNA polymerase holoenzyme (E-sigma F). Phosphorylates SpoIIAA on a serine residue. This phosphorylation may enable SpoIIAA to act as an anti-anti-sigma factor that counteracts SpoIIAB and thus releases sigma F from inhibition. The chain is Anti-sigma F factor from Clostridium kluyveri (strain NBRC 12016).